We begin with the raw amino-acid sequence, 282 residues long: Aquaporin PIP-type (282 aa).

The next 2 membrane-spanning stretches (helical) occupy residues 39-61 and 74-96; these read WRAA…ATVI and GLLG…TAGI. An NPA 1 motif is present at residues 102–104; the sequence is NPA. Helical transmembrane passes span 116–138, 159–181, 201–223, and 243–265; these read SLLR…VGLV, GYNK…YTVF, LPIG…TGIN, and HWIF…QYVL. The NPA 2 motif lies at 223–225; sequence NPA.

Belongs to the MIP/aquaporin (TC 1.A.8) family. PIP (TC 1.A.8.11) subfamily.

The protein resides in the membrane. In terms of biological role, water-specific channel. This is Aquaporin PIP-type from Atriplex canescens (Fourwing saltbush).